Reading from the N-terminus, the 382-residue chain is ATP phosphoribosyltransferase regulatory subunit (382 aa).

The protein belongs to the class-II aminoacyl-tRNA synthetase family. HisZ subfamily. In terms of assembly, heteromultimer composed of HisG and HisZ subunits.

It is found in the cytoplasm. It functions in the pathway amino-acid biosynthesis; L-histidine biosynthesis; L-histidine from 5-phospho-alpha-D-ribose 1-diphosphate: step 1/9. Functionally, required for the first step of histidine biosynthesis. May allow the feedback regulation of ATP phosphoribosyltransferase activity by histidine. In Burkholderia pseudomallei (strain K96243), this protein is ATP phosphoribosyltransferase regulatory subunit.